We begin with the raw amino-acid sequence, 546 residues long: Peptidoglycan transport ATP-binding protein YejF (546 aa).

ABC transporter domains lie at 12–261 (VRDL…RHLL) and 291–530 (IKAG…KALL). ATP-binding positions include 46–53 (GESGSGKS) and 323–330 (GESGSGKT).

This sequence belongs to the ABC transporter superfamily. The complex is composed of one ATP-binding protein (YejF), two transmembrane proteins (YejB and YejE) and a solute-binding protein (YepA or YejA).

The protein localises to the cell inner membrane. Its function is as follows. Part of the ABC transporter complex YejBEF-YepA involved in the uptake of muropeptides, the breakdown products of cell wall peptidoglycan. The import of muropeptides into the cell enables peptidoglycan recycling, which is vital for cell wall integrity in this bacterium. Is also probably part of the ABC transporter complex YejABEF, which is likely involved in broad-spectrum peptide import. Responsible for energy coupling to the transport system. The sequence is that of Peptidoglycan transport ATP-binding protein YejF from Agrobacterium fabrum (strain C58 / ATCC 33970) (Agrobacterium tumefaciens (strain C58)).